Consider the following 253-residue polypeptide: 5-oxoprolinase subunit A (253 aa).

Belongs to the LamB/PxpA family. In terms of assembly, forms a complex composed of PxpA, PxpB and PxpC.

It carries out the reaction 5-oxo-L-proline + ATP + 2 H2O = L-glutamate + ADP + phosphate + H(+). In terms of biological role, catalyzes the cleavage of 5-oxoproline to form L-glutamate coupled to the hydrolysis of ATP to ADP and inorganic phosphate. The polypeptide is 5-oxoprolinase subunit A (Azorhizobium caulinodans (strain ATCC 43989 / DSM 5975 / JCM 20966 / LMG 6465 / NBRC 14845 / NCIMB 13405 / ORS 571)).